Reading from the N-terminus, the 258-residue chain is Polysialic acid transport protein KpsM (258 aa).

Residues 30–251 (LGYLWAILEP…FIGLALYRTR (222 aa)) form the ABC transmembrane type-2 domain. 6 helical membrane passes run 33-53 (LWAILEPSAHLLILLGIFGYI), 61-81 (ISFPVFLLNGLIPFFIFSSIS), 110-130 (ALLETLIYVAVYILLMLIVWM), 144-164 (VLTWSLLIILSCGIGLIFMVV), 175-195 (LPILLKPLYFISCIMFPLHSI), and 227-247 (GVSLNYLAMFTLVTLFIGLAL).

This sequence belongs to the ABC-2 integral membrane protein family.

The protein localises to the cell inner membrane. Functionally, kpsM and KpsT constitute a system for the transport of polysialic acid across the cytoplasmic membrane. This chain is Polysialic acid transport protein KpsM (kpsM), found in Escherichia coli.